The following is a 495-amino-acid chain: Glycerol kinase (495 aa).

Threonine 13 is a binding site for ADP. ATP contacts are provided by threonine 13, threonine 14, and serine 15. Threonine 13 provides a ligand contact to sn-glycerol 3-phosphate. ADP is bound at residue arginine 17. Arginine 83, glutamate 84, tyrosine 135, and aspartate 244 together coordinate sn-glycerol 3-phosphate. Residues arginine 83, glutamate 84, tyrosine 135, aspartate 244, and glutamine 245 each coordinate glycerol. ADP contacts are provided by threonine 266 and glycine 309. 4 residues coordinate ATP: threonine 266, glycine 309, glutamine 313, and glycine 410. ADP is bound by residues glycine 410 and asparagine 414.

This sequence belongs to the FGGY kinase family.

The enzyme catalyses glycerol + ATP = sn-glycerol 3-phosphate + ADP + H(+). Its pathway is polyol metabolism; glycerol degradation via glycerol kinase pathway; sn-glycerol 3-phosphate from glycerol: step 1/1. Inhibited by fructose 1,6-bisphosphate (FBP). Functionally, key enzyme in the regulation of glycerol uptake and metabolism. Catalyzes the phosphorylation of glycerol to yield sn-glycerol 3-phosphate. This chain is Glycerol kinase, found in Shewanella sediminis (strain HAW-EB3).